Here is a 294-residue protein sequence, read N- to C-terminus: Phosphatidylserine decarboxylase proenzyme (294 aa).

Catalysis depends on charge relay system; for autoendoproteolytic cleavage activity residues D113, H169, and S256. S256 functions as the Schiff-base intermediate with substrate; via pyruvic acid; for decarboxylase activity in the catalytic mechanism. Position 256 is a pyruvic acid (Ser); by autocatalysis (S256).

The protein belongs to the phosphatidylserine decarboxylase family. PSD-B subfamily. Prokaryotic type II sub-subfamily. As to quaternary structure, heterodimer of a large membrane-associated beta subunit and a small pyruvoyl-containing alpha subunit. It depends on pyruvate as a cofactor. Post-translationally, is synthesized initially as an inactive proenzyme. Formation of the active enzyme involves a self-maturation process in which the active site pyruvoyl group is generated from an internal serine residue via an autocatalytic post-translational modification. Two non-identical subunits are generated from the proenzyme in this reaction, and the pyruvate is formed at the N-terminus of the alpha chain, which is derived from the carboxyl end of the proenzyme. The autoendoproteolytic cleavage occurs by a canonical serine protease mechanism, in which the side chain hydroxyl group of the serine supplies its oxygen atom to form the C-terminus of the beta chain, while the remainder of the serine residue undergoes an oxidative deamination to produce ammonia and the pyruvoyl prosthetic group on the alpha chain. During this reaction, the Ser that is part of the protease active site of the proenzyme becomes the pyruvoyl prosthetic group, which constitutes an essential element of the active site of the mature decarboxylase.

It is found in the cell membrane. The catalysed reaction is a 1,2-diacyl-sn-glycero-3-phospho-L-serine + H(+) = a 1,2-diacyl-sn-glycero-3-phosphoethanolamine + CO2. Its pathway is phospholipid metabolism; phosphatidylethanolamine biosynthesis; phosphatidylethanolamine from CDP-diacylglycerol: step 2/2. In terms of biological role, catalyzes the formation of phosphatidylethanolamine (PtdEtn) from phosphatidylserine (PtdSer). This is Phosphatidylserine decarboxylase proenzyme from Clostridium perfringens (strain SM101 / Type A).